The primary structure comprises 359 residues: TGACG-sequence-specific DNA-binding protein TGA-1A (359 aa).

Over residues 44-54 the composition is skewed to basic and acidic residues; that stretch reads KRLDNETEDTS. Residues 44 to 72 are disordered; it reads KRLDNETEDTSHGTVGTSNRYEPETSKPV. Residues 72 to 135 enclose the bZIP domain; the sequence is VEKVLRRLAQ…GGVDASQLSY (64 aa). Residues 73–125 adopt a coiled-coil conformation; the sequence is EKVLRRLAQNREAARKSRLRKKAYVQQLENSKLKLIQLEQELERARKQGMCVG. The tract at residues 74-94 is basic motif; that stretch reads KVLRRLAQNREAARKSRLRKK. Positions 100–114 are leucine-zipper; the sequence is LENSKLKLIQLEQEL. The DOG1 domain occupies 143–354; that stretch reads TAVFDMEYGH…RVLSSQWATR (212 aa).

Belongs to the bZIP family. As to quaternary structure, binds DNA as a dimer.

The protein localises to the nucleus. In terms of biological role, transcriptional activator that binds specifically to the DNA sequence 5'-TGACG-3'. Recognizes ocs elements like the as-1 motif of the cauliflower mosaic virus 35S promoter. Binding to the as-1-like cis elements mediate auxin- and salicylic acid-inducible transcription. Could also bind to the Hex-motif (5'-TGACGTGG-3') another cis-acting element found in plant histone promoters. This Nicotiana tabacum (Common tobacco) protein is TGACG-sequence-specific DNA-binding protein TGA-1A (TGA1A).